The following is a 239-amino-acid chain: MEIFPAIDLKKGRCVRLYQGEFSKETVMNEDPVAQAIIFETFGAKRLHIVDLDGAVAGESLNLSVIERICKAVRIPVQVGGGIRSLVAVEKLFSVGVDKVILGTAALYDKPFLEEAVFLYKEKIIVGIDAKNGFVATRGWLDVSEISYIDLAKQMENIGVQTIVFTDISKDGTLAGPNIAQLELLQKSVSTRLIASGGIASIQDVKKLNDMNIYGVIIGKALYEKTIDLEEVLEVTKLC.

Asp-8 acts as the Proton acceptor in catalysis. Asp-129 serves as the catalytic Proton donor.

This sequence belongs to the HisA/HisF family.

It is found in the cytoplasm. The enzyme catalyses 1-(5-phospho-beta-D-ribosyl)-5-[(5-phospho-beta-D-ribosylamino)methylideneamino]imidazole-4-carboxamide = 5-[(5-phospho-1-deoxy-D-ribulos-1-ylimino)methylamino]-1-(5-phospho-beta-D-ribosyl)imidazole-4-carboxamide. Its pathway is amino-acid biosynthesis; L-histidine biosynthesis; L-histidine from 5-phospho-alpha-D-ribose 1-diphosphate: step 4/9. This chain is 1-(5-phosphoribosyl)-5-[(5-phosphoribosylamino)methylideneamino] imidazole-4-carboxamide isomerase, found in Bacillus cereus (strain ATCC 10987 / NRS 248).